A 108-amino-acid polypeptide reads, in one-letter code: UPF0060 membrane protein DSY4157 (108 aa).

Helical transmembrane passes span 6 to 26, 31 to 51, 60 to 80, and 86 to 106; these read ILFI…WLWL, PYWY…IPTL, VYAA…WGVD, and TYDW…LWAP.

It belongs to the UPF0060 family.

The protein resides in the cell membrane. This is UPF0060 membrane protein DSY4157 from Desulfitobacterium hafniense (strain Y51).